Reading from the N-terminus, the 429-residue chain is L-cysteine:1D-myo-inositol 2-amino-2-deoxy-alpha-D-glucopyranoside ligase (429 aa).

C60 contributes to the Zn(2+) binding site. L-cysteinyl-5'-AMP-binding positions include 60–63 (CGIT), T75, and 98–100 (NIT). Positions 62–72 (ITPYDATHLGH) match the 'HIGH' region motif. Residues 204–209 (ERGGDP) carry the 'ERGGDP' region motif. Residue W244 coordinates L-cysteinyl-5'-AMP. C248 provides a ligand contact to Zn(2+). An L-cysteinyl-5'-AMP-binding site is contributed by 266 to 268 (GSD). Position 273 (H273) interacts with Zn(2+). I300 provides a ligand contact to L-cysteinyl-5'-AMP. Positions 306–310 (KMSKS) match the 'KMSKS' region motif.

Belongs to the class-I aminoacyl-tRNA synthetase family. MshC subfamily. In terms of assembly, monomer. Zn(2+) is required as a cofactor.

It carries out the reaction 1D-myo-inositol 2-amino-2-deoxy-alpha-D-glucopyranoside + L-cysteine + ATP = 1D-myo-inositol 2-(L-cysteinylamino)-2-deoxy-alpha-D-glucopyranoside + AMP + diphosphate + H(+). Catalyzes the ATP-dependent condensation of GlcN-Ins and L-cysteine to form L-Cys-GlcN-Ins. The polypeptide is L-cysteine:1D-myo-inositol 2-amino-2-deoxy-alpha-D-glucopyranoside ligase (Mycolicibacterium vanbaalenii (strain DSM 7251 / JCM 13017 / BCRC 16820 / KCTC 9966 / NRRL B-24157 / PYR-1) (Mycobacterium vanbaalenii)).